The primary structure comprises 380 residues: mRNA cap guanine-N(7) methyltransferase (380 aa).

In terms of domain architecture, mRNA cap 0 methyltransferase spans 24 to 333; sequence SRIFFMRNMN…MYLVFGFRKK (310 aa). 33–34 provides a ligand contact to mRNA; it reads NN. S-adenosyl-L-methionine contacts are provided by K37, A62, D84, D117, Q139, and Y144. Positions 336 to 380 are disordered; that stretch reads EAEKTEEEPATTKPVAESESEQKEVTESEEKEDQEDCEHQEAQTN.

It belongs to the class I-like SAM-binding methyltransferase superfamily. mRNA cap 0 methyltransferase family.

Its subcellular location is the nucleus. The catalysed reaction is a 5'-end (5'-triphosphoguanosine)-ribonucleoside in mRNA + S-adenosyl-L-methionine = a 5'-end (N(7)-methyl 5'-triphosphoguanosine)-ribonucleoside in mRNA + S-adenosyl-L-homocysteine. MRNA-capping methyltransferase that methylates the N7 position of the added guanosine to the 5'-cap structure of mRNAs. Binds RNA containing 5'-terminal GpppC. The protein is mRNA cap guanine-N(7) methyltransferase (tag-72) of Caenorhabditis elegans.